The primary structure comprises 65 residues: MKAKEIREMTNRELEAKLDELKEELFNLRFQVATGQIENPMRLKQVRKDIARVKTILRERELNIS.

Belongs to the universal ribosomal protein uL29 family.

In Natranaerobius thermophilus (strain ATCC BAA-1301 / DSM 18059 / JW/NM-WN-LF), this protein is Large ribosomal subunit protein uL29.